Reading from the N-terminus, the 261-residue chain is Metallo-beta-lactamase fold-containing protein ST1585 (261 aa).

Zn(2+) contacts are provided by His-58, His-60, Asp-62, His-63, His-148, Asp-165, and His-207.

This sequence belongs to the metallo-beta-lactamase superfamily. As to quaternary structure, monomer.

The polypeptide is Metallo-beta-lactamase fold-containing protein ST1585 (Sulfurisphaera tokodaii (strain DSM 16993 / JCM 10545 / NBRC 100140 / 7) (Sulfolobus tokodaii)).